A 49-amino-acid polypeptide reads, in one-letter code: Fungus-induced-related protein 16 (49 aa).

This Caenorhabditis elegans protein is Fungus-induced-related protein 16 (fipr-16).